A 101-amino-acid polypeptide reads, in one-letter code: MERFVLKFLLIDKVIAVCLDQKISNERLNPLTEYFFWPQRDAWEDMKNFIDNNDWIDPKDAVNILNRITEVINFWEESAQLKKEDIKNLNIKFPDCVFIVM.

It belongs to the chloroplast-specific ribosomal protein cS23 family. In terms of assembly, part of the 30S ribosomal subunit.

The protein localises to the plastid. Its subcellular location is the chloroplast. Probably a ribosomal protein or a ribosome-associated protein. This chain is Small ribosomal subunit protein cS23 (ycf65), found in Euglena mutabilis.